The primary structure comprises 183 residues: ATP synthase subunit b, chloroplastic (183 aa).

Residues 27–49 (LATNLINLTVVVGVLIFFGKGVL) traverse the membrane as a helical segment.

The protein belongs to the ATPase B chain family. F-type ATPases have 2 components, F(1) - the catalytic core - and F(0) - the membrane proton channel. F(1) has five subunits: alpha(3), beta(3), gamma(1), delta(1), epsilon(1). F(0) has four main subunits: a(1), b(1), b'(1) and c(10-14). The alpha and beta chains form an alternating ring which encloses part of the gamma chain. F(1) is attached to F(0) by a central stalk formed by the gamma and epsilon chains, while a peripheral stalk is formed by the delta, b and b' chains.

The protein resides in the plastid. It is found in the chloroplast thylakoid membrane. Functionally, f(1)F(0) ATP synthase produces ATP from ADP in the presence of a proton or sodium gradient. F-type ATPases consist of two structural domains, F(1) containing the extramembraneous catalytic core and F(0) containing the membrane proton channel, linked together by a central stalk and a peripheral stalk. During catalysis, ATP synthesis in the catalytic domain of F(1) is coupled via a rotary mechanism of the central stalk subunits to proton translocation. Component of the F(0) channel, it forms part of the peripheral stalk, linking F(1) to F(0). This chain is ATP synthase subunit b, chloroplastic, found in Hordeum vulgare (Barley).